A 397-amino-acid polypeptide reads, in one-letter code: Enoyl-[acyl-carrier-protein] reductase [NADH] (397 aa).

NAD(+)-binding positions include 48–53 (GASTGY), 74–75 (FE), 111–112 (DA), and 139–140 (VA). A substrate-binding site is contributed by Y225. The active-site Proton donor is Y235. NAD(+)-binding positions include K244 and 273 to 275 (VVT).

This sequence belongs to the TER reductase family. Monomer.

The catalysed reaction is a 2,3-saturated acyl-[ACP] + NAD(+) = a (2E)-enoyl-[ACP] + NADH + H(+). The protein operates within lipid metabolism; fatty acid biosynthesis. In terms of biological role, involved in the final reduction of the elongation cycle of fatty acid synthesis (FAS II). Catalyzes the reduction of a carbon-carbon double bond in an enoyl moiety that is covalently linked to an acyl carrier protein (ACP). The sequence is that of Enoyl-[acyl-carrier-protein] reductase [NADH] from Burkholderia mallei (strain NCTC 10247).